Consider the following 246-residue polypeptide: 2-deoxyglucose-6-phosphate phosphatase 1 (246 aa).

The active-site Nucleophile is the aspartate 83. A Mg(2+)-binding site is contributed by aspartate 83. Substrate contacts are provided by residues aspartate 83, glutamate 92, and aspartate 146–asparagine 149. Aspartate 183 contributes to the Mg(2+) binding site.

The protein belongs to the HAD-like hydrolase superfamily. DOG/GPP family. It depends on Mg(2+) as a cofactor.

It carries out the reaction 2-deoxy-D-glucose 6-phosphate + H2O = 2-deoxy-D-glucose + phosphate. In terms of biological role, phosphatase that is active on 2-deoxy-D-glucose 6-phosphate (2-DOG-6P), as well as on fructose-1-P. This chain is 2-deoxyglucose-6-phosphate phosphatase 1, found in Saccharomyces cerevisiae (strain ATCC 204508 / S288c) (Baker's yeast).